A 178-amino-acid polypeptide reads, in one-letter code: Transmembrane protein 196 (178 aa).

4 helical membrane-spanning segments follow: residues 11 to 31 (LLVL…VGAV), 47 to 67 (SSPV…ILCA), 73 to 93 (LVMI…ILNF), and 106 to 126 (LYPL…GCTL).

Expression is significantly decreased in lung cancer cells compared to normal lung tissue (at protein level).

It is found in the cytoplasm. The protein resides in the membrane. Acts as a tumor suppressor in lung cancer. Inhibits tumor cell growth by inhibiting cell proliferation and migration and promoting cell apoptosis. Inhibits metastasis of lung cancer by suppressing beta-catenin expression in the Wnt/beta-catenin signaling pathway. This is Transmembrane protein 196 (TMEM196) from Homo sapiens (Human).